Here is a 201-residue protein sequence, read N- to C-terminus: GTP cyclohydrolase 1 (201 aa).

The segment at 1 to 20 is disordered; it reads MDATVKKMSPETSRPSREEA. Positions 91, 94, and 162 each coordinate Zn(2+).

It belongs to the GTP cyclohydrolase I family. In terms of assembly, homomer.

It carries out the reaction GTP + H2O = 7,8-dihydroneopterin 3'-triphosphate + formate + H(+). Its pathway is cofactor biosynthesis; 7,8-dihydroneopterin triphosphate biosynthesis; 7,8-dihydroneopterin triphosphate from GTP: step 1/1. The chain is GTP cyclohydrolase 1 from Allorhizobium ampelinum (strain ATCC BAA-846 / DSM 112012 / S4) (Agrobacterium vitis (strain S4)).